The following is a 159-amino-acid chain: Transcription elongation factor A protein-like 1 (159 aa).

The segment at 1–121 is disordered; it reads MDKPRKENEE…QFKGDIHGRN (121 aa). Basic and acidic residues predominate over residues 17–34; the sequence is KTDEERPPVEHSPEKQSP. The span at 37 to 54 shows a compositional bias: acidic residues; the sequence is QSSEEQSSEEEFFPEELL. Basic and acidic residues-rich tracts occupy residues 64 to 80 and 95 to 119; these read SEER…DLFE and HKLE…DIHG.

This sequence belongs to the TFS-II family. TFA subfamily.

Its subcellular location is the nucleus. In terms of biological role, may be involved in transcriptional regulation. Modulates various viral and cellular promoters in a promoter context-dependent manner. Does not bind DNA directly. This chain is Transcription elongation factor A protein-like 1, found in Gorilla gorilla gorilla (Western lowland gorilla).